Reading from the N-terminus, the 252-residue chain is tRNA (guanine-N(1)-)-methyltransferase (252 aa).

S-adenosyl-L-methionine-binding positions include G113 and 133–138; that span reads IGDYVL.

It belongs to the RNA methyltransferase TrmD family. Homodimer.

It is found in the cytoplasm. The enzyme catalyses guanosine(37) in tRNA + S-adenosyl-L-methionine = N(1)-methylguanosine(37) in tRNA + S-adenosyl-L-homocysteine + H(+). Its function is as follows. Specifically methylates guanosine-37 in various tRNAs. The protein is tRNA (guanine-N(1)-)-methyltransferase of Xanthomonas campestris pv. campestris (strain B100).